Reading from the N-terminus, the 312-residue chain is MEIIFYHPTFDTQYWICELEKQLPGARVREWKAGDNRPADYALVWHPPVEMLQGRALKAVFALGAGVDSILSKLRDHPDMLPLSIPLFRLEDTGMGRQMQEYAVSQVLHWFRRFDDYQALKLASRWQPLPEYRADEFTVGIMGAGVLGAKVAESLQPWGFPLRVWSRSRKSWPQVQSFAGQAELGEFMQGTRVLINLLPNTAETAGIINQTLLAQLPDESYVLNLARGVHVVEEDLLAALNSGKLKGAMLDVFSREPLPQESPLWAHPRVAMTPHVAAVTRPMEAITYIAETISRLERGEPVSGQVDRQRGY.

The active site involves Arg227. His275 (proton donor) is an active-site residue.

Belongs to the D-isomer specific 2-hydroxyacid dehydrogenase family. GhrA subfamily.

The protein localises to the cytoplasm. The catalysed reaction is glycolate + NADP(+) = glyoxylate + NADPH + H(+). The enzyme catalyses (R)-glycerate + NAD(+) = 3-hydroxypyruvate + NADH + H(+). It catalyses the reaction (R)-glycerate + NADP(+) = 3-hydroxypyruvate + NADPH + H(+). Functionally, catalyzes the NADPH-dependent reduction of glyoxylate and hydroxypyruvate into glycolate and glycerate, respectively. This Klebsiella pneumoniae subsp. pneumoniae (strain ATCC 700721 / MGH 78578) protein is Glyoxylate/hydroxypyruvate reductase A.